A 73-amino-acid polypeptide reads, in one-letter code: RNA-binding protein Hfq (73 aa).

A Sm domain is found at 8-68; that stretch reads DQFLNQIRKD…ISTFAPQKNV (61 aa).

The protein belongs to the Hfq family. In terms of assembly, homohexamer.

Functionally, RNA chaperone that binds small regulatory RNA (sRNAs) and mRNAs to facilitate mRNA translational regulation in response to envelope stress, environmental stress and changes in metabolite concentrations. Also binds with high specificity to tRNAs. This Bacillus pumilus (strain SAFR-032) protein is RNA-binding protein Hfq.